The primary structure comprises 163 residues: uncharacterized protein (163 aa).

Expressed in keratinocytes.

This is an uncharacterized protein from Homo sapiens (Human).